We begin with the raw amino-acid sequence, 61 residues long: Small ribosomal subunit protein uS14 (61 aa).

Zn(2+) is bound by residues Cys-24, Cys-27, Cys-40, and Cys-43.

The protein belongs to the universal ribosomal protein uS14 family. Zinc-binding uS14 subfamily. As to quaternary structure, part of the 30S ribosomal subunit. Contacts proteins S3 and S10. The cofactor is Zn(2+).

In terms of biological role, binds 16S rRNA, required for the assembly of 30S particles and may also be responsible for determining the conformation of the 16S rRNA at the A site. The chain is Small ribosomal subunit protein uS14 from Dictyoglomus turgidum (strain DSM 6724 / Z-1310).